A 284-amino-acid polypeptide reads, in one-letter code: Four and a half LIM domains protein 5 (284 aa).

The C4-type zinc finger occupies 8–32 (CQYCTASLLGKKYVLKDDNLYCISC). LIM zinc-binding domains are found at residues 39–100 (NYCE…ECSS), 101–160 (KCFH…KEFA), 161–220 (HYCN…LYAK), and 221–283 (KCAA…ADTD).

Interacts with CREM (via the third LIM domain). Interacts (via second LIM domain) with SPAG8.

It is found in the nucleus. Functionally, may be involved in the regulation of spermatogenesis. Stimulates CREM transcriptional activity in a phosphorylation-independent manner. This Rattus norvegicus (Rat) protein is Four and a half LIM domains protein 5 (Fhl5).